Reading from the N-terminus, the 416-residue chain is NADH-quinone oxidoreductase subunit H (416 aa).

9 helical membrane passes run 16-36, 84-104, 124-144, 165-185, 197-217, 260-280, 288-308, 320-340, and 353-373; these read LILA…LAAI, PVYL…FAVI, LAVA…GIVL, VVSY…YAGT, STWY…SMVG, VSAL…PISL, WWPL…YIWL, FMAI…MIVA, and WASG…VILW.

This sequence belongs to the complex I subunit 1 family. NDH-1 is composed of 14 different subunits. Subunits NuoA, H, J, K, L, M, N constitute the membrane sector of the complex.

Its subcellular location is the cell membrane. The catalysed reaction is a quinone + NADH + 5 H(+)(in) = a quinol + NAD(+) + 4 H(+)(out). Its function is as follows. NDH-1 shuttles electrons from NADH, via FMN and iron-sulfur (Fe-S) centers, to quinones in the respiratory chain. The immediate electron acceptor for the enzyme in this species is believed to be menaquinone. Couples the redox reaction to proton translocation (for every two electrons transferred, four hydrogen ions are translocated across the cytoplasmic membrane), and thus conserves the redox energy in a proton gradient. This subunit may bind ubiquinone. This is NADH-quinone oxidoreductase subunit H from Mycobacterium sp. (strain KMS).